Consider the following 158-residue polypeptide: Large ribosomal subunit protein uL11 (158 aa).

It belongs to the universal ribosomal protein uL11 family. In terms of assembly, part of the ribosomal stalk of the 50S ribosomal subunit. Interacts with L10 and the large rRNA to form the base of the stalk. L10 forms an elongated spine to which L12 dimers bind in a sequential fashion forming a multimeric L10(L12)X complex.

In terms of biological role, forms part of the ribosomal stalk which helps the ribosome interact with GTP-bound translation factors. The protein is Large ribosomal subunit protein uL11 of Methanoregula boonei (strain DSM 21154 / JCM 14090 / 6A8).